Reading from the N-terminus, the 382-residue chain is 1-deoxy-D-xylulose 5-phosphate reductoisomerase (382 aa).

Positions 10, 11, 12, 13, 38, and 120 each coordinate NADPH. Lys121 is a 1-deoxy-D-xylulose 5-phosphate binding site. Glu122 is a binding site for NADPH. Asp146 is a binding site for Mn(2+). Positions 147, 148, 172, and 195 each coordinate 1-deoxy-D-xylulose 5-phosphate. Mn(2+) is bound at residue Glu148. Gly201 is an NADPH binding site. Residues Ser208, Asn213, Lys214, and Glu217 each coordinate 1-deoxy-D-xylulose 5-phosphate. Glu217 contributes to the Mn(2+) binding site.

Belongs to the DXR family. Mg(2+) is required as a cofactor. The cofactor is Mn(2+).

It carries out the reaction 2-C-methyl-D-erythritol 4-phosphate + NADP(+) = 1-deoxy-D-xylulose 5-phosphate + NADPH + H(+). It functions in the pathway isoprenoid biosynthesis; isopentenyl diphosphate biosynthesis via DXP pathway; isopentenyl diphosphate from 1-deoxy-D-xylulose 5-phosphate: step 1/6. In terms of biological role, catalyzes the NADPH-dependent rearrangement and reduction of 1-deoxy-D-xylulose-5-phosphate (DXP) to 2-C-methyl-D-erythritol 4-phosphate (MEP). This Caldanaerobacter subterraneus subsp. tengcongensis (strain DSM 15242 / JCM 11007 / NBRC 100824 / MB4) (Thermoanaerobacter tengcongensis) protein is 1-deoxy-D-xylulose 5-phosphate reductoisomerase.